The primary structure comprises 612 residues: Putative pentatricopeptide repeat-containing protein At5g40405 (612 aa).

PPR repeat units follow at residues 70 to 104 (TLFA…GNDL), 107 to 141 (DNYT…GFDN), 142 to 172 (DPHV…IPCP), 173 to 203 (DFVC…MPER), 204 to 238 (DPIA…GVKV), 239 to 273 (NGVA…KIKI), 274 to 304 (TVRL…MEEK), 305 to 339 (NVYT…GVTP), 340 to 375 (NAVT…GIEP), and 376 to 410 (QLEH…PHAA). A type E motif region spans residues 411 to 486 (VWSSLLHASR…QPGCSVMEVN (76 aa)). The interval 487–517 (GEVHEFFVGDKSHPKYTQIDAVWKDISRRLR) is type E(+) motif. Residues 518 to 612 (LAGYKADTTP…DGHCSCNGFW (95 aa)) are type DYW motif.

It belongs to the PPR family. PCMP-H subfamily.

This is Putative pentatricopeptide repeat-containing protein At5g40405 (PCMP-H14) from Arabidopsis thaliana (Mouse-ear cress).